The sequence spans 211 residues: Small ribosomal subunit protein uS4 (211 aa).

Residues 98–161 form the S4 RNA-binding domain; sequence RRLDNVVYRL…RDIPFIKENL (64 aa).

This sequence belongs to the universal ribosomal protein uS4 family. In terms of assembly, part of the 30S ribosomal subunit. Contacts protein S5. The interaction surface between S4 and S5 is involved in control of translational fidelity.

One of the primary rRNA binding proteins, it binds directly to 16S rRNA where it nucleates assembly of the body of the 30S subunit. Its function is as follows. With S5 and S12 plays an important role in translational accuracy. This Aquifex aeolicus (strain VF5) protein is Small ribosomal subunit protein uS4.